The primary structure comprises 348 residues: Rhodopsin (348 aa).

Met1 bears the N-acetylmethionine mark. Topologically, residues 1–36 (MNGTEGPNFYVPFSNATGVVRSPFEYPQYYLAEPWQ) are extracellular. 2 N-linked (GlcNAc...) asparagine glycosylation sites follow: Asn2 and Asn15. Residues 37 to 61 (FSMLAAYMFMLIVLGFPINFLTLYV) traverse the membrane as a helical segment. The Cytoplasmic segment spans residues 62–73 (TVQHKKLRTPLN). The chain crosses the membrane as a helical span at residues 74–96 (YILLNLAVADLFMVFGGFTTTLY). Residues 97–110 (TSLHGYFVFGPTGC) are Extracellular-facing. Cys110 and Cys187 are disulfide-bonded. The helical transmembrane segment at 111 to 133 (NLEGFFATLGGEIALWSLVVLAI) threads the bilayer. The 'Ionic lock' involved in activated form stabilization motif lies at 134 to 136 (ERY). The Cytoplasmic portion of the chain corresponds to 134 to 152 (ERYVVVCKPMSNFRFGENH). Residues 153 to 173 (AIMGLVFTWIMALACAAPPLV) form a helical membrane-spanning segment. Topologically, residues 174 to 202 (GWSRYIPEGMQCSCGIDYYTLKPEVNNES) are extracellular. Glu201 provides a ligand contact to Zn(2+). A helical transmembrane segment spans residues 203–224 (FVIYMFVVHFFIPLFVIFFCYG). The Cytoplasmic portion of the chain corresponds to 225 to 252 (QLVFTVKEAAAQQQESATTQKAEKEVTR). The helical transmembrane segment at 253-274 (MVIIMVIAFLICWLPYAGVAFY) threads the bilayer. Topologically, residues 275 to 286 (IFTHQGSNFGPI) are extracellular. Gln279 contributes to the Zn(2+) binding site. A helical membrane pass occupies residues 287 to 308 (FMTLPAFFAKTASIYNPVIYIM). At Lys296 the chain carries N6-(retinylidene)lysine. Residues 309–348 (MNKQFRTCMITTLCCGKNPLGDDEASTTASKTETSQVAPA) lie on the Cytoplasmic side of the membrane. S-palmitoyl cysteine attachment occurs at residues Cys322 and Cys323. An interaction with SAG region spans residues 330–348 (DDEASTTASKTETSQVAPA). Ser334 bears the Phosphoserine mark. Residues Thr335 and Thr336 each carry the phosphothreonine modification. Ser338 is subject to Phosphoserine. Residues Thr340 and Thr342 each carry the phosphothreonine modification. Phosphoserine is present on Ser343.

This sequence belongs to the G-protein coupled receptor 1 family. Opsin subfamily. In terms of assembly, homodimer. May form a complex composed of RHO, GRK1 and RCVRN in a Ca(2+)-dependent manner; RCVRN prevents the interaction between GRK1 and RHO. Interacts with GRK1. Interacts (phosphorylated form) with SAG. Interacts with GNAT1. Interacts with GNAT3. SAG and G-proteins compete for a common binding site. Interacts with PRCD; the interaction promotes PRCD stability. Forms a complex with ASAP1 and ARF4. Forms a complex with ASAP1, RAB11A, Rabin8/RAB3IP, ARF4 and RAB11FIP3; the complex regulates Golgi-to-cilia rhodopsin/RHO transport in photoreceptors. In terms of processing, phosphorylated on some or all of the serine and threonine residues present in the C-terminal region. Post-translationally, contains one covalently linked retinal chromophore. Upon light absorption, the covalently bound 11-cis-retinal is converted to all-trans-retinal. After hydrolysis of the Schiff base and release of the covalently bound all-trans-retinal, active rhodopsin is regenerated by binding of a fresh molecule of 11-cis-retinal.

The protein localises to the membrane. It is found in the cell projection. Its subcellular location is the cilium. It localises to the photoreceptor outer segment. Photoreceptor required for image-forming vision at low light intensity. Required for photoreceptor cell viability after birth. Light-induced isomerization of 11-cis to all-trans retinal triggers a conformational change that activates signaling via G-proteins. Subsequent receptor phosphorylation mediates displacement of the bound G-protein alpha subunit by the arrestin SAG and terminates signaling. This Otolemur crassicaudatus (Brown greater galago) protein is Rhodopsin (RHO).